Here is a 115-residue protein sequence, read N- to C-terminus: U3-lycotoxin-Ls1q (115 aa).

The N-terminal stretch at 1 to 20 is a signal peptide; sequence MKFVLLFGVLLVTLFSYSSA. A propeptide spanning residues 21-44 is cleaved from the precursor; that stretch reads EMFDDFDQADEDELLSLIEKEEAR. Intrachain disulfides connect Cys-48-Cys-63, Cys-55-Cys-72, Cys-62-Cys-87, and Cys-74-Cys-85.

It belongs to the neurotoxin 19 (CSTX) family. 01 subfamily. As to expression, expressed by the venom gland.

Its subcellular location is the secreted. The polypeptide is U3-lycotoxin-Ls1q (Lycosa singoriensis (Wolf spider)).